Reading from the N-terminus, the 103-residue chain is Small ribosomal subunit protein uS10 (103 aa).

It belongs to the universal ribosomal protein uS10 family. As to quaternary structure, part of the 30S ribosomal subunit.

Functionally, involved in the binding of tRNA to the ribosomes. In Marinomonas sp. (strain MWYL1), this protein is Small ribosomal subunit protein uS10.